The primary structure comprises 232 residues: Putative N-acetylmannosamine-6-phosphate 2-epimerase (232 aa).

This sequence belongs to the NanE family.

The enzyme catalyses an N-acyl-D-glucosamine 6-phosphate = an N-acyl-D-mannosamine 6-phosphate. The protein operates within amino-sugar metabolism; N-acetylneuraminate degradation; D-fructose 6-phosphate from N-acetylneuraminate: step 3/5. Converts N-acetylmannosamine-6-phosphate (ManNAc-6-P) to N-acetylglucosamine-6-phosphate (GlcNAc-6-P). In Borreliella afzelii (strain PKo) (Borrelia afzelii), this protein is Putative N-acetylmannosamine-6-phosphate 2-epimerase.